The sequence spans 265 residues: Tryptophan synthase alpha chain (265 aa).

Residues E50 and D61 each act as proton acceptor in the active site.

This sequence belongs to the TrpA family. As to quaternary structure, tetramer of two alpha and two beta chains.

The enzyme catalyses (1S,2R)-1-C-(indol-3-yl)glycerol 3-phosphate + L-serine = D-glyceraldehyde 3-phosphate + L-tryptophan + H2O. It participates in amino-acid biosynthesis; L-tryptophan biosynthesis; L-tryptophan from chorismate: step 5/5. Functionally, the alpha subunit is responsible for the aldol cleavage of indoleglycerol phosphate to indole and glyceraldehyde 3-phosphate. The polypeptide is Tryptophan synthase alpha chain (Trichodesmium erythraeum (strain IMS101)).